The chain runs to 345 residues: Molybdopterin synthase catalytic subunit (345 aa).

Residues 101–102, Lys117, and 124–126 each bind substrate; these read HR and KKE.

This sequence belongs to the MoaE family. MOCS2B subfamily. In terms of assembly, heterotetramer; composed of 2 small (Mocs2A) and 2 large (Mocs2B) subunits.

The protein resides in the cytoplasm. The enzyme catalyses 2 [molybdopterin-synthase sulfur-carrier protein]-C-terminal-Gly-aminoethanethioate + cyclic pyranopterin phosphate + H2O = molybdopterin + 2 [molybdopterin-synthase sulfur-carrier protein]-C-terminal Gly-Gly + 2 H(+). It functions in the pathway cofactor biosynthesis; molybdopterin biosynthesis. Its function is as follows. Catalytic subunit of the molybdopterin synthase complex, a complex that catalyzes the conversion of precursor Z into molybdopterin. Acts by mediating the incorporation of 2 sulfur atoms from thiocarboxylated Mocs2A into precursor Z to generate a dithiolene group. This is Molybdopterin synthase catalytic subunit from Drosophila virilis (Fruit fly).